The chain runs to 621 residues: Membrane protein insertase YidC (621 aa).

Transmembrane regions (helical) follow at residues 1–21 (MDKN…GFSI), 363–383 (GWGL…KVLV), 436–456 (MGGC…FFFV), 486–506 (IPLL…TNIL), 527–547 (LMMY…SSGL), and 549–569 (YYYF…RKTT).

The protein belongs to the OXA1/ALB3/YidC family. Type 1 subfamily. As to quaternary structure, interacts with the Sec translocase complex via SecD. Specifically interacts with transmembrane segments of nascent integral membrane proteins during membrane integration.

The protein resides in the cell inner membrane. In terms of biological role, required for the insertion and/or proper folding and/or complex formation of integral membrane proteins into the membrane. Involved in integration of membrane proteins that insert both dependently and independently of the Sec translocase complex, as well as at least some lipoproteins. Aids folding of multispanning membrane proteins. This chain is Membrane protein insertase YidC, found in Phocaeicola vulgatus (strain ATCC 8482 / DSM 1447 / JCM 5826 / CCUG 4940 / NBRC 14291 / NCTC 11154) (Bacteroides vulgatus).